The sequence spans 198 residues: MKNDSLKGQHRINEQIRAKEVRIVGDDVESAVYPIAQALKMAEDHEADLVEISPNAVPPVCRIIDYSKFLYQLKKRQKEQKAKQVKVNVKEIRFGPQTDDHDYNFKLKHAIGFLQDGDKVKAYVFFKGRSILFKEQGEVLLLRFANDLEEYAKVEQMPLLEGKRMTISLAPKKAGSPKKAETDTAKKENPKKAVETKE.

The disordered stretch occupies residues 168–198 (SLAPKKAGSPKKAETDTAKKENPKKAVETKE). The span at 178-198 (KKAETDTAKKENPKKAVETKE) shows a compositional bias: basic and acidic residues.

The protein belongs to the IF-3 family. As to quaternary structure, monomer.

Its subcellular location is the cytoplasm. In terms of biological role, IF-3 binds to the 30S ribosomal subunit and shifts the equilibrium between 70S ribosomes and their 50S and 30S subunits in favor of the free subunits, thus enhancing the availability of 30S subunits on which protein synthesis initiation begins. This is Translation initiation factor IF-3 from Phocaeicola vulgatus (strain ATCC 8482 / DSM 1447 / JCM 5826 / CCUG 4940 / NBRC 14291 / NCTC 11154) (Bacteroides vulgatus).